The chain runs to 1693 residues: Latrophilin Cirl (1693 aa).

Residues 1–774 (MVLQGAKQRL…LFTMFDGNMR (774 aa)) are Extracellular-facing. One can recognise an SUEL-type lectin domain in the interval 30–119 (ACEGKKLTIE…KYLEAHYQCV (90 aa)). Residues N147, N260, N306, and N345 are each glycosylated (N-linked (GlcNAc...) asparagine). The disordered stretch occupies residues 190 to 309 (PPATHATPPG…GPSVSSNGSA (120 aa)). Polar residues-rich tracts occupy residues 259 to 269 (SNATAPSNTRI) and 287 to 309 (KSSPNRTPGTAASGPSVSSNGSA). Residues 379-406 (SFDEDDEEMAGTSTTTPMSTSGDCLHNS) form a disordered region. The span at 390–399 (TSTTTPMSTS) shows a compositional bias: low complexity. Residues N405, N662, N710, and N737 are each glycosylated (N-linked (GlcNAc...) asparagine). Positions 568–761 (RSVVQKVKNI…AILMDVVDEH (194 aa)) constitute a GAIN-B domain. 2 disulfide bridges follow: C716–C743 and C731–C745. The GPS stretch occupies residues 716 to 761 (CVFWNYIDHAWSANGCSLESTNRTHSVCSCNHLTNFAILMDVVDEH). Residues 775–795 (IFIYISIAICVVFIVIALLTL) form a helical membrane-spanning segment. At 796–808 (KLFNGVFVKSART) the chain is on the cytoplasmic side. Residues 809–829 (SIYINIYICLLAIELLFLLGI) traverse the membrane as a helical segment. Residues 830–835 (EQTETS) lie on the Extracellular side of the membrane. A helical membrane pass occupies residues 836–856 (IFCGFITVFLHCAILSGTSWF). The Cytoplasmic portion of the chain corresponds to 857–882 (CYEAFHSYSTLTSDELLLEVDQTPKV). A helical membrane pass occupies residues 883–903 (NCYYLLSYGLSLSVVAISLVI). The Extracellular segment spans residues 904–927 (NPSTYTQNDYCVLMEANAVFYATF). The helical transmembrane segment at 928 to 948 (VAPVLIFFMAAIGYTFLSWII) threads the bilayer. Residues 949-975 (MCRKSRTGLKTKEHTRLATVRFDIRCS) lie on the Cytoplasmic side of the membrane. Residues 976 to 996 (FVFFLLLSAVWCSAYFYLRGA) form a helical membrane-spanning segment. Residues 997 to 1003 (KMDEDVT) lie on the Extracellular side of the membrane. Residues 1004-1024 (GIYGYNFICFNTLLGLYIFVF) traverse the membrane as a helical segment. Residues 1025–1693 (HCIQNEKIRR…VRCYLEPLAK (669 aa)) are Cytoplasmic-facing. Residues 1089 to 1109 (PLGTNDDAHDEQQQQQHMSAT) form a disordered region. A phosphoserine mark is found at S1165, S1256, and S1263. 4 disordered regions span residues 1237-1264 (KPNSQHGKKKRGGVGAIPASPSGSLHSR), 1279-1362 (KTKP…APPP), 1450-1529 (SRYG…LPPQ), and 1596-1678 (SMRG…SAML). Residues 1307–1323 (QQQQQLRQQRQQQQQQL) are compositionally biased toward low complexity. A phosphoserine mark is found at S1324 and S1325. Residues 1337 to 1357 (LHLQHQQQQQQQRRAGGQQQL) are compositionally biased toward low complexity. The segment covering 1464–1475 (RNQQQQQHSLAQ) has biased composition (polar residues). 2 stretches are compositionally biased toward acidic residues: residues 1485 to 1498 (DEDDDEDEDDEETT) and 1508 to 1521 (CDEEEEDEESDMED). Residues 1640–1663 (QQLQKLSPQSTTSSSSHTSHSNPH) are compositionally biased toward low complexity.

Belongs to the G-protein coupled receptor 2 family. LN-TM7 subfamily. Forms a heterodimer, consisting of a large extracellular region non-covalently linked to a seven-transmembrane moiety. Proteolytically cleaved into 2 subunits, an extracellular subunit and a seven-transmembrane subunit.

Its subcellular location is the cell membrane. This Drosophila pseudoobscura pseudoobscura (Fruit fly) protein is Latrophilin Cirl.